Reading from the N-terminus, the 209-residue chain is CASP-like protein 2A2 (209 aa).

The Cytoplasmic portion of the chain corresponds to 1-37 (MSKTAGVGRLGGARAADAAQQQQLAAGDAAVARAARP). A helical membrane pass occupies residues 38–58 (IETLLRAAPLVLCVAAMTLML). Topologically, residues 59-79 (RDQQSNEYGTVAYSDLGGFKY) are extracellular. The chain crosses the membrane as a helical span at residues 80 to 100 (LVYANGLCAAYSLASAFYTAV). Topologically, residues 101-109 (PRPATVSRS) are cytoplasmic. Residues 110-130 (WVVFLLDQVFTYLILAAGAAA) form a helical membrane-spanning segment. Residues 131–161 (AELLYLAYNGDKEVTWSEACGVFGSFCRQAR) lie on the Extracellular side of the membrane. The helical transmembrane segment at 162–182 (ISVAITFGAVLCFILLSLLSS) threads the bilayer. Residues 183–209 (YRLFSAYEAPPPSALGSKGVEIAAYPR) lie on the Cytoplasmic side of the membrane.

The protein belongs to the Casparian strip membrane proteins (CASP) family. Homodimer and heterodimers.

It is found in the cell membrane. This is CASP-like protein 2A2 from Zea mays (Maize).